Consider the following 777-residue polypeptide: Ral guanine nucleotide dissociation stimulator-like 2 (777 aa).

The interval 1–54 (MLPRPLRLLLDTSPPGGVVLSSFRSRDPEEGGGPGGLVVGGGQEEEEEEEEEAP) is disordered. Residue Ser13 is modified to Phosphoserine. Over residues 31-42 (GGGPGGLVVGGG) the composition is skewed to gly residues. The segment covering 43–54 (QEEEEEEEEEAP) has biased composition (acidic residues). The region spanning 88–212 (SSRRLRAGTL…GSADLIRNLR (125 aa)) is the N-terminal Ras-GEF domain. The Ras-GEF domain maps to 243–513 (LADHLAEQLT…HRVSCEVEPP (271 aa)). Ser409 is modified (phosphoserine). 2 stretches are compositionally biased toward low complexity: residues 581 to 610 (SLDS…SPRP) and 618 to 632 (ASCG…EEAS). 2 disordered regions span residues 581–644 (SLDS…GSGP) and 734–766 (RRSS…PRIK). Residues 633–644 (GGTGYGGEGSGP) show a composition bias toward gly residues. One can recognise a Ras-associating domain in the interval 648–735 (DCRIIRVQME…HDFLLRQRRR (88 aa)). The span at 740 to 755 (TPGVTSGPSASGTPPS) shows a compositional bias: low complexity.

In terms of assembly, interacts with SAMD9.

Functionally, probable guanine nucleotide exchange factor. Putative effector of Ras and/or Rap. Associates with the GTP-bound form of Rap 1A and H-Ras in vitro. This Homo sapiens (Human) protein is Ral guanine nucleotide dissociation stimulator-like 2 (RGL2).